Here is a 419-residue protein sequence, read N- to C-terminus: D-amino acid dehydrogenase (419 aa).

3-17 (VLILGGGVVGVTSAY) lines the FAD pocket.

The protein belongs to the DadA oxidoreductase family. FAD is required as a cofactor.

The catalysed reaction is a D-alpha-amino acid + A + H2O = a 2-oxocarboxylate + AH2 + NH4(+). It functions in the pathway amino-acid degradation; D-alanine degradation; NH(3) and pyruvate from D-alanine: step 1/1. Functionally, oxidative deamination of D-amino acids. In Methylobacterium radiotolerans (strain ATCC 27329 / DSM 1819 / JCM 2831 / NBRC 15690 / NCIMB 10815 / 0-1), this protein is D-amino acid dehydrogenase.